The primary structure comprises 466 residues: Ras-GEF domain-containing family member 1C (466 aa).

2 disordered regions span residues 1–35 (MPRT…PLLD) and 443–466 (SESP…LGKT). The region spanning 34 to 164 (LDGAPSSASL…LLQTLHQKLA (131 aa)) is the N-terminal Ras-GEF domain. The Ras-GEF domain occupies 200–446 (DPYTLAQQLT…YLASYESESP (247 aa)).

In terms of biological role, guanine nucleotide exchange factor (GEF). The chain is Ras-GEF domain-containing family member 1C (Rasgef1c) from Mus musculus (Mouse).